The primary structure comprises 446 residues: Kynurenine 3-monooxygenase (446 aa).

Belongs to the aromatic-ring hydroxylase family. KMO subfamily. FAD is required as a cofactor.

It catalyses the reaction L-kynurenine + NADPH + O2 + H(+) = 3-hydroxy-L-kynurenine + NADP(+) + H2O. The protein operates within cofactor biosynthesis; NAD(+) biosynthesis; quinolinate from L-kynurenine: step 1/3. In terms of biological role, catalyzes the hydroxylation of L-kynurenine (L-Kyn) to form 3-hydroxy-L-kynurenine (L-3OHKyn). Required for synthesis of quinolinic acid. The chain is Kynurenine 3-monooxygenase from Flavobacterium johnsoniae (strain ATCC 17061 / DSM 2064 / JCM 8514 / BCRC 14874 / CCUG 350202 / NBRC 14942 / NCIMB 11054 / UW101) (Cytophaga johnsonae).